Here is a 291-residue protein sequence, read N- to C-terminus: Pyridoxal 5'-phosphate synthase subunit PdxS (291 aa).

Position 23 (aspartate 23) interacts with D-ribose 5-phosphate. Residue lysine 80 is the Schiff-base intermediate with D-ribose 5-phosphate of the active site. Glycine 152 contributes to the D-ribose 5-phosphate binding site. Arginine 164 serves as a coordination point for D-glyceraldehyde 3-phosphate. D-ribose 5-phosphate is bound by residues glycine 213 and 234–235; that span reads GS.

This sequence belongs to the PdxS/SNZ family. In the presence of PdxT, forms a dodecamer of heterodimers.

It carries out the reaction aldehydo-D-ribose 5-phosphate + D-glyceraldehyde 3-phosphate + L-glutamine = pyridoxal 5'-phosphate + L-glutamate + phosphate + 3 H2O + H(+). The protein operates within cofactor biosynthesis; pyridoxal 5'-phosphate biosynthesis. In terms of biological role, catalyzes the formation of pyridoxal 5'-phosphate from ribose 5-phosphate (RBP), glyceraldehyde 3-phosphate (G3P) and ammonia. The ammonia is provided by the PdxT subunit. Can also use ribulose 5-phosphate and dihydroxyacetone phosphate as substrates, resulting from enzyme-catalyzed isomerization of RBP and G3P, respectively. In Clostridium acetobutylicum (strain ATCC 824 / DSM 792 / JCM 1419 / IAM 19013 / LMG 5710 / NBRC 13948 / NRRL B-527 / VKM B-1787 / 2291 / W), this protein is Pyridoxal 5'-phosphate synthase subunit PdxS.